Here is a 93-residue protein sequence, read N- to C-terminus: Small integral membrane protein 41 (93 aa).

A helical transmembrane segment spans residues 38-58; that stretch reads VVLGVLSLLVLCGVLFLGGGL. The span at 71-80 shows a compositional bias: basic and acidic residues; that stretch reads REQRASREPE. The interval 71–93 is disordered; sequence REQRASREPEPGSASGEDGDDDS.

The protein resides in the membrane. The protein is Small integral membrane protein 41 of Homo sapiens (Human).